Here is a 317-residue protein sequence, read N- to C-terminus: MAIAIIAEYNPFHNGHIYQLEYTKKNFPNDKIYIILSGNFTQRGEISLADFKTKSKIALKYGADFIIKLPFEYATQAAHIFAKGAIKIVNQHKIDKIIFGSESNDVENLYKLANLWNQNQEAYNAFLKYALKLGYSFPKASAFALEEISGQKIVFPNDILGFEYIKQIVANNYPIRAYTLKRSEEFSLKNPEPNIASATYLRQLVNENKSISRFSPMKFIHPVCSLANLYPEFQKIVRETSPENLAKIWLISEGIENLFKKHINEPNFEKFLNAVNSRRYTNSRIKRAMVYILFRIEDPSQFDEEKIQLDCWKNQGF.

ATP is bound by residues 6–19 (IAEY…HIYQ), glycine 100, asparagine 157, and arginine 182.

Belongs to the TmcAL family.

It localises to the cytoplasm. The catalysed reaction is cytidine(34) in elongator tRNA(Met) + acetate + ATP = N(4)-acetylcytidine(34) in elongator tRNA(Met) + AMP + diphosphate. Functionally, catalyzes the formation of N(4)-acetylcytidine (ac(4)C) at the wobble position of elongator tRNA(Met), using acetate and ATP as substrates. First activates an acetate ion to form acetyladenylate (Ac-AMP) and then transfers the acetyl group to tRNA to form ac(4)C34. The sequence is that of tRNA(Met) cytidine acetate ligase from Mesomycoplasma hyopneumoniae (strain J / ATCC 25934 / NCTC 10110) (Mycoplasma hyopneumoniae).